We begin with the raw amino-acid sequence, 704 residues long: Low calcium response locus protein D (704 aa).

A run of 7 helical transmembrane segments spans residues 18–35 (IMLA…VLPL), 42–61 (ILIA…AIYI), 108–132 (FVVG…FLVI), 200–220 (AIAG…IGVT), 235–259 (ILTV…GIIV), 278–297 (VVAQ…LFGL), and 304–320 (VTFL…GYML).

It belongs to the FHIPEP (flagella/HR/invasion proteins export pore) family.

The protein resides in the cell inner membrane. Its function is as follows. Could be involved in the secretion of the yop virulence proteins. The sequence is that of Low calcium response locus protein D (lcrD) from Yersinia pestis.